The sequence spans 254 residues: Isoprenyl transferase (254 aa).

Aspartate 23 is an active-site residue. Position 23 (aspartate 23) interacts with Mg(2+). Substrate contacts are provided by residues 24–27 (GNGR), tryptophan 28, arginine 36, histidine 40, and 68–70 (STE). Catalysis depends on asparagine 71, which acts as the Proton acceptor. Substrate contacts are provided by residues tryptophan 72, arginine 74, arginine 191, and 197–199 (RIS). Residue glutamate 210 participates in Mg(2+) binding.

This sequence belongs to the UPP synthase family. In terms of assembly, homodimer. Mg(2+) serves as cofactor.

Functionally, catalyzes the condensation of isopentenyl diphosphate (IPP) with allylic pyrophosphates generating different type of terpenoids. The polypeptide is Isoprenyl transferase (Porphyromonas gingivalis (strain ATCC BAA-308 / W83)).